Reading from the N-terminus, the 222-residue chain is Large ribosomal subunit protein uL4 (222 aa).

Belongs to the universal ribosomal protein uL4 family. Part of the 50S ribosomal subunit.

One of the primary rRNA binding proteins, this protein initially binds near the 5'-end of the 23S rRNA. It is important during the early stages of 50S assembly. It makes multiple contacts with different domains of the 23S rRNA in the assembled 50S subunit and ribosome. Its function is as follows. Forms part of the polypeptide exit tunnel. The chain is Large ribosomal subunit protein uL4 from Methylacidiphilum infernorum (isolate V4) (Methylokorus infernorum (strain V4)).